We begin with the raw amino-acid sequence, 54 residues long: Large ribosomal subunit protein bL32c (54 aa).

Belongs to the bacterial ribosomal protein bL32 family.

Its subcellular location is the plastid. It is found in the chloroplast. The sequence is that of Large ribosomal subunit protein bL32c from Helianthus annuus (Common sunflower).